A 620-amino-acid polypeptide reads, in one-letter code: DNA mismatch repair protein MutL (620 aa).

It belongs to the DNA mismatch repair MutL/HexB family.

Functionally, this protein is involved in the repair of mismatches in DNA. It is required for dam-dependent methyl-directed DNA mismatch repair. May act as a 'molecular matchmaker', a protein that promotes the formation of a stable complex between two or more DNA-binding proteins in an ATP-dependent manner without itself being part of a final effector complex. The sequence is that of DNA mismatch repair protein MutL from Clostridium tetani (strain Massachusetts / E88).